Reading from the N-terminus, the 159-residue chain is Ribosomal RNA large subunit methyltransferase H (159 aa).

S-adenosyl-L-methionine is bound by residues L76, G108, and 127 to 132 (FSKMTF).

The protein belongs to the RNA methyltransferase RlmH family. In terms of assembly, homodimer.

The protein resides in the cytoplasm. It carries out the reaction pseudouridine(1915) in 23S rRNA + S-adenosyl-L-methionine = N(3)-methylpseudouridine(1915) in 23S rRNA + S-adenosyl-L-homocysteine + H(+). Specifically methylates the pseudouridine at position 1915 (m3Psi1915) in 23S rRNA. The sequence is that of Ribosomal RNA large subunit methyltransferase H from Clostridium novyi (strain NT).